A 250-amino-acid chain; its full sequence is Thioesterase FPSE_09186 (250 aa).

The protein belongs to the AMT4 thioesterase family.

It participates in secondary metabolite biosynthesis. Functionally, thioesterase; part of the gene cluster that mediates the biosynthesis of the lipopeptides W493 A and B. W493 A and B consist of six amino acid residues D-allo-thr, L-Ala, D-Ala, L-Gln, D-Tyr, and L-Val/L-Ile linked to a 3-hydroxy-4-methyltetradecanoic acid polyketide chain. The biosynthesis starts with formation of the linear polyketide chain by the highly reducing polyketide synthase PKS40. The gene cluster contains a putative acyl-CoA ligase (FPSE_09184) for formation of a CoA thioester polyketide. The thiol bond could be hydrolyzed by the putative thioesterase (FPSE_09186) and then accepted by the first T domain in module 1 of NRPS32. The second T domain is responsible for accepting a threonine, which is adenylated by the A domain and epimerized to the D-allo-threonine formed by the E domain. The five successive modules incorporate Ala, Ala, Gln, Tyr, and Val/Ile into the final product, which is released by cyclization. In Fusarium pseudograminearum (strain CS3096) (Wheat and barley crown-rot fungus), this protein is Thioesterase FPSE_09186.